Consider the following 701-residue polypeptide: Elongation factor G (701 aa).

The tr-type G domain maps to 8–290; it reads TQYRNIGISA…AIIEYLPSPK (283 aa). Residues 17 to 24, 88 to 92, and 142 to 145 each bind GTP; these read AHIDAGKT, DTPGH, and NKMD.

It belongs to the TRAFAC class translation factor GTPase superfamily. Classic translation factor GTPase family. EF-G/EF-2 subfamily.

The protein resides in the cytoplasm. Functionally, catalyzes the GTP-dependent ribosomal translocation step during translation elongation. During this step, the ribosome changes from the pre-translocational (PRE) to the post-translocational (POST) state as the newly formed A-site-bound peptidyl-tRNA and P-site-bound deacylated tRNA move to the P and E sites, respectively. Catalyzes the coordinated movement of the two tRNA molecules, the mRNA and conformational changes in the ribosome. The protein is Elongation factor G of Buchnera aphidicola subsp. Cinara cedri (strain Cc).